A 263-amino-acid chain; its full sequence is Type II restriction enzyme TaqI (263 aa).

Post-translationally, only 15% of purified enzyme (upon expression in E.coli) can be sequenced, suggesting the remainder has a blocked N-terminus.

It carries out the reaction Endonucleolytic cleavage of DNA to give specific double-stranded fragments with terminal 5'-phosphates.. In terms of biological role, a P subtype restriction enzyme that recognizes the double-stranded sequence 5'-TCGA-3' and cleaves after T-1. The protein is Type II restriction enzyme TaqI (taqIR) of Thermus aquaticus.